The chain runs to 872 residues: Alanine--tRNA ligase (872 aa).

Residues H566, H570, C668, and H672 each contribute to the Zn(2+) site.

Belongs to the class-II aminoacyl-tRNA synthetase family. Zn(2+) serves as cofactor.

The protein localises to the cytoplasm. The enzyme catalyses tRNA(Ala) + L-alanine + ATP = L-alanyl-tRNA(Ala) + AMP + diphosphate. Functionally, catalyzes the attachment of alanine to tRNA(Ala) in a two-step reaction: alanine is first activated by ATP to form Ala-AMP and then transferred to the acceptor end of tRNA(Ala). Also edits incorrectly charged Ser-tRNA(Ala) and Gly-tRNA(Ala) via its editing domain. This Lactococcus lactis subsp. cremoris (strain MG1363) protein is Alanine--tRNA ligase.